Consider the following 276-residue polypeptide: Pantothenate synthetase (276 aa).

26-33 (MGYLHEGH) contributes to the ATP binding site. Catalysis depends on H33, which acts as the Proton donor. Q57 is a (R)-pantoate binding site. Q57 is a beta-alanine binding site. Residue 142 to 145 (GLKD) participates in ATP binding. (R)-pantoate is bound at residue Q148. ATP-binding positions include I171 and 179–182 (KSSR).

The protein belongs to the pantothenate synthetase family. As to quaternary structure, homodimer.

The protein resides in the cytoplasm. It carries out the reaction (R)-pantoate + beta-alanine + ATP = (R)-pantothenate + AMP + diphosphate + H(+). It participates in cofactor biosynthesis; (R)-pantothenate biosynthesis; (R)-pantothenate from (R)-pantoate and beta-alanine: step 1/1. Its function is as follows. Catalyzes the condensation of pantoate with beta-alanine in an ATP-dependent reaction via a pantoyl-adenylate intermediate. This is Pantothenate synthetase from Exiguobacterium sp. (strain ATCC BAA-1283 / AT1b).